Here is a 406-residue protein sequence, read N- to C-terminus: MLYPRNLALFSLLSLSSAAPSQVERSPDAVLKPRAVCTPTAGGSPSIDDVPAIRKAIASCGNGGTIVFPAGSTYYLNSVLDLAGCSNCDIQVEGVLKFSGSTEYWGGKTAMLNIDMINGLRLRSLTGSGVIDGNGQNAYDRFASDKNYKRPTLLYITGGSNIEVSGLRQKNPPNVFNSVKGDTQHVTFKNLRMDATSNSQNPPKNTDGFDIGASTHVTISSVSVTNDDDCVAFKPGSNYVTVEDVTCTGSHGISVGSLGKSGTDVVQNILAHRINMIESTKAAGIKTYPSGNGHGLSTVKNVTFSDFNVRGCDYAFQIESCYGESESYCESNPGNAILQGIVVKGFSGTTSGKYDPVVANLNCGARGTCDVSMSAFSVKAPSGKATVLCDNTPSSLGVSCTSGASG.

A signal peptide spans 1–18; sequence MLYPRNLALFSLLSLSSA. 4 PbH1 repeats span residues 183-213, 214-235, 237-257, and 299-320; these read TQHV…DIGA, STHV…AFKP, SNYV…SVGS, and VKNV…QIES. The active-site Proton donor is the Asp228. Residue His251 is part of the active site. Asn301 is a glycosylation site (N-linked (GlcNAc...) asparagine).

The protein belongs to the glycosyl hydrolase 28 family.

It localises to the secreted. Functionally, pectinolytic enzyme involved in the degradation of xylogalacturonan (xga), a galacturonan backbone heavily substituted with xylose, and which is one important component of the hairy regions of pectin. Activity requires a galacturonic acid backbone substituted with xylose. The sequence is that of Probable endo-xylogalacturonan hydrolase A (xghA) from Aspergillus fumigatus (strain CBS 144.89 / FGSC A1163 / CEA10) (Neosartorya fumigata).